Consider the following 239-residue polypeptide: Ribosomal RNA small subunit methyltransferase G (239 aa).

S-adenosyl-L-methionine is bound by residues Gly77, Phe82, 128–129, and Arg146; that span reads AE. The segment at 216–239 is disordered; the sequence is KRRQTSKKYPRKPGTPNKSPLVES.

It belongs to the methyltransferase superfamily. RNA methyltransferase RsmG family.

The protein resides in the cytoplasm. In terms of biological role, specifically methylates the N7 position of guanine in position 535 of 16S rRNA. The sequence is that of Ribosomal RNA small subunit methyltransferase G from Staphylococcus epidermidis (strain ATCC 35984 / DSM 28319 / BCRC 17069 / CCUG 31568 / BM 3577 / RP62A).